An 856-amino-acid polypeptide reads, in one-letter code: Envelope glycoprotein GP350 (856 aa).

Residues 1–809 (MEAALLVCQY…TSQPRFSNLS (809 aa)) lie on the Virion surface side of the membrane. 27 N-linked (GlcNAc...) asparagine; by host glycosylation sites follow: N47, N87, N114, N166, N169, N195, N229, N277, N318, N328, N345, N356, N378, N386, N411, N435, N443, N457, N497, N519, N533, N554, N568, N582, N585, N603, and N614. Residues 421–779 (FSKAPESTTT…PPSTSSELRP (359 aa)) form a disordered region. The span at 427–437 (STTTSPTSNTT) shows a compositional bias: low complexity. The segment covering 442–488 (PNTTTGLPSSTHVPTNLTAPASTGPTVSTADVTSPTPAGTTSGASPV) has biased composition (polar residues). Residues 507–570 (TSPTPAVTTP…AVTTPTPNAT (64 aa)) are compositionally biased toward low complexity. Positions 575-616 (GETSPQANTTNHTLGGTSSTPVVTSQPKNATSAVTTGQHNIT) are enriched in polar residues. A compositionally biased stretch (low complexity) spans 617-631 (SSSTSSMSLRPSSIS). N650 is a glycosylation site (N-linked (GlcNAc...) asparagine; by host). Residues 654 to 669 (VTPASTSTHHVSTSSP) are compositionally biased toward low complexity. The span at 674–690 (GTTSQASGPGNSSTSTK) shows a compositional bias: polar residues. N-linked (GlcNAc...) asparagine; by host glycans are attached at residues N684, N695, N704, and N729. The segment covering 703–730 (KNATSPQAPSGQKTAVPTVTSTGGKANS) has biased composition (polar residues). The segment covering 731-741 (TTGGKHTTGHG) has biased composition (low complexity). A compositionally biased stretch (polar residues) spans 743 to 776 (RTSTEPTTDYGGDSTTPRTRYNATTYLPPSTSSE). 2 N-linked (GlcNAc...) asparagine; by host glycosylation sites follow: N764 and N807. Residues 810-830 (MLVLQWASLAVLTLLLLLVMA) form a helical membrane-spanning segment. The Intravirion portion of the chain corresponds to 831 to 856 (DCAFRRNLSTSHTYTTPPYDDAETYV).

Belongs to the Epstein-Barr GP350 family. Interacts with host CR2. Post-translationally, extensively glycosylated.

The protein localises to the virion membrane. The protein resides in the host membrane. Its function is as follows. Initiates virion attachment to host B-lymphocyte cell, leading to virus entry. Acts by binding to host CR2 at the surface of B-lymphocytes, facilitating the binding of viral glycoprotein gp42 to HLA class II molecules. Attachment triggers virion-host membrane fusion and invasion of the host cell. The chain is Envelope glycoprotein GP350 from Homo sapiens (Human).